The sequence spans 1149 residues: DNA-directed RNA polymerase III subunit RPC2 (1149 aa).

Zn(2+) is bound by residues cysteine 1095, cysteine 1098, cysteine 1107, and cysteine 1110. The segment at 1095–1110 adopts a C4-type zinc-finger fold; the sequence is CDKCGLMGYSGWCTTC.

The protein belongs to the RNA polymerase beta chain family. Component of the RNA polymerase III (Pol III) complex consisting of 17 subunits.

It is found in the nucleus. The enzyme catalyses RNA(n) + a ribonucleoside 5'-triphosphate = RNA(n+1) + diphosphate. Functionally, DNA-dependent RNA polymerase catalyzes the transcription of DNA into RNA using the four ribonucleoside triphosphates as substrates. Second largest core component of RNA polymerase III which synthesizes small RNAs, such as 5S rRNA and tRNAs. Proposed to contribute to the polymerase catalytic activity and forms the polymerase active center together with the largest subunit. Pol III is composed of mobile elements and RPC2 is part of the core element with the central large cleft and probably a clamp element that moves to open and close the cleft. The polypeptide is DNA-directed RNA polymerase III subunit RPC2 (RET1) (Saccharomyces cerevisiae (strain ATCC 204508 / S288c) (Baker's yeast)).